Here is a 46-residue protein sequence, read N- to C-terminus: U-limacoditoxin(6)-Dv61 (46 aa).

The N-terminal stretch at 1 to 19 is a signal peptide; that stretch reads MSKLLVLLMTTALATLAQA.

It belongs to the limacoditoxin-6 family. In terms of tissue distribution, expressed by the venom secretory cell of the spine. The spine is a cuticular structure containing a single large nucleated venom-secreting cell at its base. It is an independent unit capable of producing, storing and injecting venom. On the back of D.vulnerans caterpillars, spines are grouped together by 50 to 100 to form scoli, of which there are eight in D.vulnerans.

The protein localises to the secreted. Its function is as follows. Probable toxin. Does not show insecticidal, antimicrobial and antiparasitic activities. Does not induce increase in intracellular calcium in mouse DRG neurons, suggesting that it does not induce pain. The protein is U-limacoditoxin(6)-Dv61 of Doratifera vulnerans (Mottled cup moth).